The following is a 338-amino-acid chain: P2Y purinoceptor 14 (338 aa).

Topologically, residues 1–29 (MNNSTTTDPPNQPCSWNTLITKQIIPVLY) are extracellular. Asparagine 2 and asparagine 3 each carry an N-linked (GlcNAc...) asparagine glycan. The helical transmembrane segment at 30–50 (GMVFITGLLLNGISGWIFFYV) threads the bilayer. Over 51 to 55 (PSSKS) the chain is Cytoplasmic. A helical transmembrane segment spans residues 56 to 76 (FIIYLKNIVVADFLMGLTFPF). Residues 77–96 (KVLGDSGLGPWQVNVFVCRV) lie on the Extracellular side of the membrane. Cysteine 94 and cysteine 172 are oxidised to a cystine. A helical transmembrane segment spans residues 97–117 (SAVIFYVNMYVSIVFFGLISF). Over 118 to 139 (DRYYKIVKPLLTSIVQSVNYSK) the chain is Cytoplasmic. The chain crosses the membrane as a helical span at residues 140–160 (LLSVLVWMLMLLLAVPNIILT). The Extracellular portion of the chain corresponds to 161–188 (NQGVKEVTKIQCMELKNELGRKWHKASN). A helical transmembrane segment spans residues 189–209 (YIFVSIFWVVFLLLIVFYTAI). Residues 210-234 (TRKIFKSHLKSRKNSTSVKRKSSRN) are Cytoplasmic-facing. A helical transmembrane segment spans residues 235–255 (IFSIVLVFVVCFVPYHIARIP). At 256–278 (YTKSQTEGHYSCRTKETLLYAKE) the chain is on the extracellular side. A helical transmembrane segment spans residues 279 to 299 (FTLLLSAANVCLDPIIYFFLC). At 300 to 338 (QPFREVLNKKLHMSLKVQNDLEVSKTKRENAIHESTDTL) the chain is on the cytoplasmic side.

This sequence belongs to the G-protein coupled receptor 1 family.

The protein resides in the cell membrane. Receptor for UDP-glucose coupled to G-proteins. In Mus musculus (Mouse), this protein is P2Y purinoceptor 14 (P2ry14).